Reading from the N-terminus, the 269-residue chain is Tryptophan synthase alpha chain (269 aa).

Active-site proton acceptor residues include Glu-49 and Asp-60.

Belongs to the TrpA family. In terms of assembly, tetramer of two alpha and two beta chains.

The enzyme catalyses (1S,2R)-1-C-(indol-3-yl)glycerol 3-phosphate + L-serine = D-glyceraldehyde 3-phosphate + L-tryptophan + H2O. The protein operates within amino-acid biosynthesis; L-tryptophan biosynthesis; L-tryptophan from chorismate: step 5/5. Functionally, the alpha subunit is responsible for the aldol cleavage of indoleglycerol phosphate to indole and glyceraldehyde 3-phosphate. The protein is Tryptophan synthase alpha chain of Stutzerimonas stutzeri (strain A1501) (Pseudomonas stutzeri).